A 170-amino-acid chain; its full sequence is Lipoprotein signal peptidase (170 aa).

3 consecutive transmembrane segments (helical) span residues 9-29 (IGSVIFIFILVFIDQWSKYLV), 72-92 (LFFLVIPIIILVFVFCFILKE), and 93-113 (TNKIARIALILILSGGIGNII). Active-site residues include aspartate 124 and aspartate 146. The helical transmembrane segment at 142–162 (FNFADSYVVIGITLFIIYDLF) threads the bilayer.

It belongs to the peptidase A8 family.

The protein resides in the cell inner membrane. The enzyme catalyses Release of signal peptides from bacterial membrane prolipoproteins. Hydrolyzes -Xaa-Yaa-Zaa-|-(S,diacylglyceryl)Cys-, in which Xaa is hydrophobic (preferably Leu), and Yaa (Ala or Ser) and Zaa (Gly or Ala) have small, neutral side chains.. The protein operates within protein modification; lipoprotein biosynthesis (signal peptide cleavage). Functionally, this protein specifically catalyzes the removal of signal peptides from prolipoproteins. The polypeptide is Lipoprotein signal peptidase (Borrelia hermsii (strain HS1 / DAH)).